The sequence spans 129 residues: Glycine cleavage system H protein (129 aa).

One can recognise a Lipoyl-binding domain in the interval 24–106; sequence TFTVGITEHA…FGDGWLFRIK (83 aa). Lys65 carries the post-translational modification N6-lipoyllysine.

This sequence belongs to the GcvH family. As to quaternary structure, the glycine cleavage system is composed of four proteins: P, T, L and H. (R)-lipoate serves as cofactor.

Its function is as follows. The glycine cleavage system catalyzes the degradation of glycine. The H protein shuttles the methylamine group of glycine from the P protein to the T protein. This is Glycine cleavage system H protein from Pseudoalteromonas translucida (strain TAC 125).